A 241-amino-acid polypeptide reads, in one-letter code: Ashwin (241 aa).

Disordered regions lie at residues 1 to 21 (MAAQGRGRVGGGKEERVSARS), 82 to 102 (KMMEKKRKQNEPKSENKSVTA), and 212 to 241 (KRSVPKDESDLPNDLKPTEAKKKIQHCTWP). Positions 11–21 (GGKEERVSARS) are enriched in basic and acidic residues.

This sequence belongs to the ashwin family.

It is found in the nucleus. This chain is Ashwin, found in Gallus gallus (Chicken).